Consider the following 127-residue polypeptide: Holo-[acyl-carrier-protein] synthase (127 aa).

Mg(2+)-binding residues include aspartate 9 and glutamate 58.

This sequence belongs to the P-Pant transferase superfamily. AcpS family. Requires Mg(2+) as cofactor.

Its subcellular location is the cytoplasm. The enzyme catalyses apo-[ACP] + CoA = holo-[ACP] + adenosine 3',5'-bisphosphate + H(+). Its function is as follows. Transfers the 4'-phosphopantetheine moiety from coenzyme A to a Ser of acyl-carrier-protein. This chain is Holo-[acyl-carrier-protein] synthase, found in Shewanella baltica (strain OS223).